Here is a 63-residue protein sequence, read N- to C-terminus: Jingdongin-1 (63 aa).

Residues 1-22 form the signal peptide; sequence MLTLKKSMLLLFFLGTINLSLC. A propeptide spanning residues 23–44 is cleaved from the precursor; it reads EQERDADEEERRDDDEMDVEVE. Residues Cys57 and Cys63 are joined by a disulfide bond.

In terms of tissue distribution, expressed by the skin glands.

The protein resides in the secreted. Functionally, the synthetic peptide has antimicrobial activity against Gram-negative bacterium B.dysenteriae (MIC=35 ug/ml), against Gram-positive bacteria S.aureus ATCC 2592 (MIC=4.7 ug/ml) and B.subtilis ATCC 6633 (MIC=9.38 ug/ml) and against fungus C.albicans (MIC=18.75 ug/ml). Has no activity against Gram-negative bacterium E.coli ATCC 25922 but exhibits low hemolytic activity at concentrations up to 200 ug/ml. In Amolops jingdongensis (Chinese torrent frog), this protein is Jingdongin-1.